The following is a 264-amino-acid chain: Acyl-[acyl-carrier-protein]--UDP-N-acetylglucosamine O-acyltransferase (264 aa).

It belongs to the transferase hexapeptide repeat family. LpxA subfamily. As to quaternary structure, homotrimer.

The protein resides in the cytoplasm. The enzyme catalyses a (3R)-hydroxyacyl-[ACP] + UDP-N-acetyl-alpha-D-glucosamine = a UDP-3-O-[(3R)-3-hydroxyacyl]-N-acetyl-alpha-D-glucosamine + holo-[ACP]. Its pathway is glycolipid biosynthesis; lipid IV(A) biosynthesis; lipid IV(A) from (3R)-3-hydroxytetradecanoyl-[acyl-carrier-protein] and UDP-N-acetyl-alpha-D-glucosamine: step 1/6. Involved in the biosynthesis of lipid A, a phosphorylated glycolipid that anchors the lipopolysaccharide to the outer membrane of the cell. The protein is Acyl-[acyl-carrier-protein]--UDP-N-acetylglucosamine O-acyltransferase of Rickettsia prowazekii (strain Madrid E).